Reading from the N-terminus, the 305-residue chain is Lipoyl synthase (305 aa).

Residues Cys-41, Cys-46, Cys-52, Cys-68, Cys-72, Cys-75, and Ser-281 each contribute to the [4Fe-4S] cluster site. The region spanning 54-270 (GARRTATFMI…RKVAMDKGFK (217 aa)) is the Radical SAM core domain. Basic and acidic residues predominate over residues 283–298 (HADEQVNEAAKEKQRQ). A disordered region spans residues 283–305 (HADEQVNEAAKEKQRQGEAQLNS).

Belongs to the radical SAM superfamily. Lipoyl synthase family. It depends on [4Fe-4S] cluster as a cofactor.

It localises to the cytoplasm. It catalyses the reaction [[Fe-S] cluster scaffold protein carrying a second [4Fe-4S](2+) cluster] + N(6)-octanoyl-L-lysyl-[protein] + 2 oxidized [2Fe-2S]-[ferredoxin] + 2 S-adenosyl-L-methionine + 4 H(+) = [[Fe-S] cluster scaffold protein] + N(6)-[(R)-dihydrolipoyl]-L-lysyl-[protein] + 4 Fe(3+) + 2 hydrogen sulfide + 2 5'-deoxyadenosine + 2 L-methionine + 2 reduced [2Fe-2S]-[ferredoxin]. It functions in the pathway protein modification; protein lipoylation via endogenous pathway; protein N(6)-(lipoyl)lysine from octanoyl-[acyl-carrier-protein]. Its function is as follows. Catalyzes the radical-mediated insertion of two sulfur atoms into the C-6 and C-8 positions of the octanoyl moiety bound to the lipoyl domains of lipoate-dependent enzymes, thereby converting the octanoylated domains into lipoylated derivatives. This chain is Lipoyl synthase, found in Staphylococcus aureus (strain Mu3 / ATCC 700698).